Consider the following 440-residue polypeptide: uncharacterized protein (440 aa).

Positions 1–17 (MDRFFCTVWVWSVLFGA) are cleaved as a signal peptide. Residue Cys18 is the site of N-palmitoyl cysteine attachment. Cys18 carries the S-diacylglycerol cysteine lipid modification. A disordered region spans residues 241–268 (SALQERPSSPEPVVSTIPSPEGEENSAA).

Its subcellular location is the cell membrane. This is an uncharacterized protein from Treponema pallidum (strain Nichols).